The chain runs to 626 residues: Carnitine O-acetyltransferase (626 aa).

Lys93 carries the N6-succinyllysine modification. Lys261 is modified (N6-acetyllysine; alternate). Residue Lys261 is modified to N6-succinyllysine; alternate. Lys268 carries the post-translational modification N6-acetyllysine. The active-site Proton acceptor is His343. CoA is bound by residues Lys419 and Lys423 to Asp430. (R)-carnitine contacts are provided by Tyr452 and Ser454. Ser456 contacts CoA. Thr465 is a (R)-carnitine binding site. Arg504 and Gln555 together coordinate CoA. The short motif at Ala624–Leu626 is the Microbody targeting signal element.

Belongs to the carnitine/choline acetyltransferase family. Monomer. In terms of tissue distribution, expressed in flagella of epididymal sperm.

It localises to the endoplasmic reticulum. Its subcellular location is the peroxisome. The protein resides in the mitochondrion inner membrane. The enzyme catalyses (R)-carnitine + acetyl-CoA = O-acetyl-(R)-carnitine + CoA. It carries out the reaction propanoyl-CoA + (R)-carnitine = O-propanoyl-(R)-carnitine + CoA. The catalysed reaction is butanoyl-CoA + (R)-carnitine = O-butanoyl-(R)-carnitine + CoA. It catalyses the reaction hexanoyl-CoA + (R)-carnitine = O-hexanoyl-(R)-carnitine + CoA. The enzyme catalyses octanoyl-CoA + (R)-carnitine = O-octanoyl-(R)-carnitine + CoA. It carries out the reaction decanoyl-CoA + (R)-carnitine = O-decanoyl-(R)-carnitine + CoA. The catalysed reaction is 3-methylbutanoyl-CoA + (R)-carnitine = O-3-methylbutanoyl-(R)-carnitine + CoA. It catalyses the reaction 2-methylpropanoyl-CoA + (R)-carnitine = O-isobutanoyl-(R)-carnitine + CoA. The enzyme catalyses 2-methylbutanoyl-CoA + (R)-carnitine = O-2-methylbutanoyl-(R)-carnitine + CoA. It carries out the reaction acetoacetyl-CoA + (R)-carnitine = O-3-oxobutanoyl-(R)-carnitine + CoA. The catalysed reaction is 3-hydroxybutanoyl-CoA + (R)-carnitine = O-3-hydroxybutanoyl-(R)-carnitine + CoA. It catalyses the reaction 4,8-dimethylnonanoyl-CoA + (R)-carnitine = O-4,8-dimethylnonanoyl-(R)-carnitine + CoA. The enzyme catalyses 2,6-dimethylheptanoyl-CoA + (R)-carnitine = O-2,6-dimethylheptanoyl-(R)-carnitine + CoA. Catalyzes the reversible transfer of acyl groups from carnitine to coenzyme A (CoA) and regulates the acyl-CoA/CoA ratio. Also plays a crucial role in the transport of fatty acids for beta-oxidation. Responsible for the synthesis of short- and branched-chain acylcarnitines. Active towards some branched-chain amino acid oxidation pathway (BCAAO) intermediates. Trans-2-enoyl-CoAs and 2-methylacyl-CoAs are poor substrates. The chain is Carnitine O-acetyltransferase from Rattus norvegicus (Rat).